A 473-amino-acid chain; its full sequence is Serine palmitoyltransferase 1 (473 aa).

Residues 1-15 (MATVAEQWVLVEMVQ) are Lumenal-facing. An interaction with SPTLC2 region spans residues 1–66 (MATVAEQWVL…KEELIEEWQP (66 aa)). The helical transmembrane segment at 16-36 (ALYEAPAYHLILEGILILWII) threads the bilayer. Topologically, residues 37-473 (RLVFSKTYKL…IREAAQAVLL (437 aa)) are cytoplasmic. A Phosphotyrosine; by ABL modification is found at tyrosine 164.

It belongs to the class-II pyridoxal-phosphate-dependent aminotransferase family. Component of the serine palmitoyltransferase (SPT) complex, which is also composed of SPTLC2 or SPTLC3 and SPTSSA or SPTSSB. The heterodimer with SPTLC2 or SPTLC3 forms the catalytic core of the enzyme, while SPTSSA or SPTSSB subunits determine substrate specificity. SPT also interacts with ORMDL proteins, especially ORMDL3, which negatively regulate SPT activity in the presence of ceramides. Forms dimers of heterodimers with SPTLC2. Interacts with RTN4 (isoform B). It depends on pyridoxal 5'-phosphate as a cofactor. Phosphorylation at Tyr-164 inhibits activity and promotes cell survival. In terms of tissue distribution, expressed in astrocytes.

It is found in the endoplasmic reticulum membrane. It carries out the reaction L-serine + hexadecanoyl-CoA + H(+) = 3-oxosphinganine + CO2 + CoA. It catalyses the reaction octadecanoyl-CoA + L-serine + H(+) = 3-oxoeicosasphinganine + CO2 + CoA. The enzyme catalyses tetradecanoyl-CoA + L-serine + H(+) = 3-oxohexadecasphinganine + CO2 + CoA. The catalysed reaction is dodecanoyl-CoA + L-serine + H(+) = 3-oxotetradecasphinganine + CO2 + CoA. Its pathway is lipid metabolism; sphingolipid metabolism. SPT complex catalytic activity is negatively regulated by ORMDL proteins, including ORMDL3, in the presence of ceramides. This mechanism allows to maintain ceramide levels at sufficient concentrations for the production of complex sphingolipids, but which prevents the accumulation of ceramides to levels that trigger apoptosis. Component of the serine palmitoyltransferase multisubunit enzyme (SPT) that catalyzes the initial and rate-limiting step in sphingolipid biosynthesis by condensing L-serine and activated acyl-CoA (most commonly palmitoyl-CoA) to form long-chain bases. The SPT complex is also composed of SPTLC2 or SPTLC3 and SPTSSA or SPTSSB. Within this complex, the heterodimer with SPTLC2 or SPTLC3 forms the catalytic core. The composition of the serine palmitoyltransferase (SPT) complex determines the substrate preference. The SPTLC1-SPTLC2-SPTSSA complex shows a strong preference for C16-CoA substrate, while the SPTLC1-SPTLC3-SPTSSA isozyme uses both C14-CoA and C16-CoA as substrates, with a slight preference for C14-CoA. The SPTLC1-SPTLC2-SPTSSB complex shows a strong preference for C18-CoA substrate, while the SPTLC1-SPTLC3-SPTSSB isozyme displays an ability to use a broader range of acyl-CoAs, without apparent preference. Required for adipocyte cell viability and metabolic homeostasis. This is Serine palmitoyltransferase 1 from Rattus norvegicus (Rat).